A 124-amino-acid polypeptide reads, in one-letter code: Putative membrane protein insertion efficiency factor (124 aa).

The protein belongs to the UPF0161 family.

It localises to the cell inner membrane. Its function is as follows. Could be involved in insertion of integral membrane proteins into the membrane. The chain is Putative membrane protein insertion efficiency factor from Psychrobacter arcticus (strain DSM 17307 / VKM B-2377 / 273-4).